The chain runs to 125 residues: Lymphocyte antigen 6 complex locus protein G6c (125 aa).

The signal sequence occupies residues 1-18 (MRALLLLSLSALLCWVSA). The UPAR/Ly6 domain maps to 20-111 (IRCHSCYKLP…PRPTPALTLV (92 aa)). Disulfide bonds link cysteine 22–cysteine 47, cysteine 25–cysteine 33, and cysteine 39–cysteine 65. A glycan (N-linked (GlcNAc...) asparagine) is linked at asparagine 88. Cysteines 92 and 97 form a disulfide. Serine 99 carries the GPI-anchor amidated serine lipid modification. The propeptide at 100–125 (PAPRPTPALTLVFLTSLAGLGLWLLH) is removed in mature form.

In terms of processing, N-glycosylated.

It localises to the cell membrane. The polypeptide is Lymphocyte antigen 6 complex locus protein G6c (LY6G6C) (Bos taurus (Bovine)).